A 138-amino-acid chain; its full sequence is Small ribosomal subunit protein uS11c (138 aa).

A disordered region spans residues 1–24 (MTKPIPRIGSRRNGRIGSRKSGRR). The segment covering 9-24 (GSRRNGRIGSRKSGRR) has biased composition (basic residues).

This sequence belongs to the universal ribosomal protein uS11 family. In terms of assembly, part of the 30S ribosomal subunit.

It is found in the plastid. The protein resides in the chloroplast. This Liriodendron tulipifera (Tuliptree) protein is Small ribosomal subunit protein uS11c.